A 1663-amino-acid polypeptide reads, in one-letter code: Cortactin-binding protein 2 (1663 aa).

Disordered regions lie at residues 1–23 (MATDGASCEPDLSRAPEDAAGAA), 203–222 (KKKTNELEEELSTEKRRSTE), 359–440 (QASH…LHPG), 454–478 (GNANDPDQNGNTTQSPPSRDVSPTS), and 498–617 (RFTS…KPSI). Residues 119 to 276 (KKMQERMSAQ…EQLKRGSDSK (158 aa)) are a coiled coil. The span at 386-396 (PSTGSTPDPTS) shows a compositional bias: low complexity. An Asymmetric dimethylarginine modification is found at Arg498. Residues 583-593 (TVASPPSSLPQ) show a composition bias toward polar residues. ANK repeat units follow at residues 709–739 (GRPTLLQQAAAQGNVTLLSMLLNEEGLDINY), 743–772 (DGHSALYSAAKNGHTDCVRLLLSAEAQVNA), 776–805 (NGFTPLCAAAAQGHFECVELLIAYDANINH), 809–838 (GGQTPLYLACKNGNKECVKLLLEAGTNRSV), 842–871 (DGWTPVHAAVDTGNVDSLKLLMYHRIPARG), and 912–942 (EGWTAAHIAASKGFKNCLEILCRHRGLEPER). The tract at residues 1446-1485 (NKKKGESGAWRKVNTSPRRKSGRFSLPTWNKPDLSTEGMK) is disordered. Residue Ser1524 is modified to Phosphoserine. The segment at 1580 to 1663 (SQKEVSPLSS…KNEHLEKPNK (84 aa)) is disordered. Residues 1582–1599 (KEVSPLSSHQTTECSNSK) show a composition bias toward polar residues. Residues 1624–1638 (SQNTKRSSSSSNTRQ) are compositionally biased toward low complexity. Residues 1645–1663 (SKEENWNLHKNEHLEKPNK) show a composition bias toward basic and acidic residues.

Interacts with CTTN/cortactin SH3 domain. Interacts with STRN, STRN4/zinedin and MOB4/phocein; this interactions mediate the association with the STRIPAK core complex and may regulate dendritic spine distribution of the STRIPAK complex in hippocampal neurons. Activation of glutamate receptors weakens the interaction with STRN and STRN4.

Its subcellular location is the cytoplasm. It is found in the cell cortex. It localises to the cell projection. The protein localises to the dendritic spine. Its function is as follows. Regulates the dendritic spine distribution of CTTN/cortactin in hippocampal neurons, and thus controls dendritic spinogenesis and dendritic spine maintenance. Associates with the striatin-interacting phosphatase and kinase (STRIPAK) core complex to regulate dendritic spine distribution of the STRIPAK complex in hippocampal neurons. In Pongo abelii (Sumatran orangutan), this protein is Cortactin-binding protein 2 (CTTNBP2).